A 72-amino-acid polypeptide reads, in one-letter code: Translational regulator CsrA (72 aa).

This sequence belongs to the CsrA/RsmA family. In terms of assembly, homodimer; the beta-strands of each monomer intercalate to form a hydrophobic core, while the alpha-helices form wings that extend away from the core.

The protein resides in the cytoplasm. Its function is as follows. A translational regulator that binds mRNA to regulate translation initiation and/or mRNA stability. Usually binds in the 5'-UTR at or near the Shine-Dalgarno sequence preventing ribosome-binding, thus repressing translation. Its main target seems to be the major flagellin gene, while its function is anatagonized by FliW. This chain is Translational regulator CsrA, found in Lachnoclostridium phytofermentans (strain ATCC 700394 / DSM 18823 / ISDg) (Clostridium phytofermentans).